We begin with the raw amino-acid sequence, 325 residues long: Olfactory receptor 5T18 (325 aa).

Topologically, residues 1 to 22 (MRNITEATFFVLKGLTDNNELQ) are extracellular. N3 is a glycosylation site (N-linked (GlcNAc...) asparagine). The next 2 helical transmembrane spans lie at 23 to 43 (IILF…NVGL) and 44 to 64 (IILV…LSVL). Over 65-97 (SSVDACYSTDITPNMLVGFMSKSKIISFYGCAT) the chain is Extracellular. A disulfide bridge connects residues C95 and C187. A helical membrane pass occupies residues 98–118 (QMFLAVTFGTTECFLLAAMAY). The Cytoplasmic segment spans residues 119–139 (DRYVAIHDPLLYAVSMSPRVY). Residues 140 to 160 (IPLIIASYAGGIVHAIIHTVA) form a helical membrane-spanning segment. The Extracellular portion of the chain corresponds to 161–194 (TFSLSFCRSNEVKHIFCDIPPLLAISCSETYVNE). The helical transmembrane segment at 195–215 (LLLFFFVSFIELVTILIVLVS) threads the bilayer. The Cytoplasmic segment spans residues 216 to 234 (YAFILLSILKMNSSEGRRK). Residues 235 to 255 (VFSTCGAHLTAVSIYYGTILF) traverse the membrane as a helical segment. The Extracellular segment spans residues 256-269 (MYVRPSSNYSLEHD). A helical membrane pass occupies residues 270–290 (MIVSTFYTIGIPMLNPIIYSL). The Cytoplasmic portion of the chain corresponds to 291-325 (RNKDVKEAMKRVLRKKINIKHRIKKLNDFSVFLMP).

This sequence belongs to the G-protein coupled receptor 1 family.

Its subcellular location is the cell membrane. Its function is as follows. Potential odorant receptor. The protein is Olfactory receptor 5T18 of Mus musculus (Mouse).